The chain runs to 270 residues: Formamidopyrimidine-DNA glycosylase (270 aa).

Residue P2 is the Schiff-base intermediate with DNA of the active site. E3 acts as the Proton donor in catalysis. Residue K57 is the Proton donor; for beta-elimination activity of the active site. H90, R109, and K150 together coordinate DNA. The FPG-type zinc-finger motif lies at 235 to 269 (LVYGNKDKPCPRCGTKIKSIIIGQRNSFFCPQCQK). R259 acts as the Proton donor; for delta-elimination activity in catalysis.

Belongs to the FPG family. In terms of assembly, monomer. It depends on Zn(2+) as a cofactor.

It carries out the reaction Hydrolysis of DNA containing ring-opened 7-methylguanine residues, releasing 2,6-diamino-4-hydroxy-5-(N-methyl)formamidopyrimidine.. It catalyses the reaction 2'-deoxyribonucleotide-(2'-deoxyribose 5'-phosphate)-2'-deoxyribonucleotide-DNA = a 3'-end 2'-deoxyribonucleotide-(2,3-dehydro-2,3-deoxyribose 5'-phosphate)-DNA + a 5'-end 5'-phospho-2'-deoxyribonucleoside-DNA + H(+). Involved in base excision repair of DNA damaged by oxidation or by mutagenic agents. Acts as a DNA glycosylase that recognizes and removes damaged bases. Has a preference for oxidized purines, such as 7,8-dihydro-8-oxoguanine (8-oxoG). Has AP (apurinic/apyrimidinic) lyase activity and introduces nicks in the DNA strand. Cleaves the DNA backbone by beta-delta elimination to generate a single-strand break at the site of the removed base with both 3'- and 5'-phosphates. In Histophilus somni (strain 2336) (Haemophilus somnus), this protein is Formamidopyrimidine-DNA glycosylase.